Here is a 106-residue protein sequence, read N- to C-terminus: CRISPR-associated endoribonuclease Cas2 (106 aa).

Position 8 (Asp-8) interacts with Mg(2+). Residues 86–106 (EEAAEAAVSYPGRSRKKARAG) form a disordered region.

Belongs to the CRISPR-associated endoribonuclease Cas2 protein family. Homodimer, forms a heterotetramer with a Cas1 homodimer. Mg(2+) is required as a cofactor.

In terms of biological role, CRISPR (clustered regularly interspaced short palindromic repeat), is an adaptive immune system that provides protection against mobile genetic elements (viruses, transposable elements and conjugative plasmids). CRISPR clusters contain sequences complementary to antecedent mobile elements and target invading nucleic acids. CRISPR clusters are transcribed and processed into CRISPR RNA (crRNA). Functions as a ssRNA-specific endoribonuclease. Involved in the integration of spacer DNA into the CRISPR cassette. This chain is CRISPR-associated endoribonuclease Cas2, found in Desulforudis audaxviator (strain MP104C).